Reading from the N-terminus, the 368-residue chain is Flagellar P-ring protein 1 (368 aa).

The first 24 residues, 1–24 (MIFKQIRRLIAAALLAALSLPAAA), serve as a signal peptide directing secretion.

This sequence belongs to the FlgI family. As to quaternary structure, the basal body constitutes a major portion of the flagellar organelle and consists of four rings (L,P,S, and M) mounted on a central rod.

It localises to the periplasm. The protein resides in the bacterial flagellum basal body. Functionally, assembles around the rod to form the L-ring and probably protects the motor/basal body from shearing forces during rotation. The protein is Flagellar P-ring protein 1 of Chromobacterium violaceum (strain ATCC 12472 / DSM 30191 / JCM 1249 / CCUG 213 / NBRC 12614 / NCIMB 9131 / NCTC 9757 / MK).